The sequence spans 704 residues: 1,4-alpha-glucan-branching enzyme (704 aa).

Residues Trp94 and Lys131 each contribute to the (1,4-alpha-D-glucosyl)n site. Ser190 is modified (phosphoserine). Catalysis depends on Asp356, which acts as the Nucleophile. The Proton donor role is filled by Glu417.

Belongs to the glycosyl hydrolase 13 family. GlgB subfamily.

It localises to the cytoplasm. It carries out the reaction Transfers a segment of a (1-&gt;4)-alpha-D-glucan chain to a primary hydroxy group in a similar glucan chain.. It functions in the pathway glycan biosynthesis; glycogen biosynthesis. Its function is as follows. Glycogen-branching enzyme participates in the glycogen biosynthetic process along with glycogenin and glycogen synthase. Generates alpha-1,6-glucosidic branches from alpha-1,4-linked glucose chains, to increase solubility of the glycogen polymer. The chain is 1,4-alpha-glucan-branching enzyme (GLC3) from Saccharomyces cerevisiae (strain ATCC 204508 / S288c) (Baker's yeast).